Consider the following 704-residue polypeptide: Elongation factor G (704 aa).

Residues 8 to 290 (EKYRNIGICA…GVVRYLPAPN (283 aa)) enclose the tr-type G domain. GTP-binding positions include 17–24 (AHVDAGKT), 88–92 (DTPGH), and 142–145 (NKMD).

The protein belongs to the TRAFAC class translation factor GTPase superfamily. Classic translation factor GTPase family. EF-G/EF-2 subfamily.

It localises to the cytoplasm. In terms of biological role, catalyzes the GTP-dependent ribosomal translocation step during translation elongation. During this step, the ribosome changes from the pre-translocational (PRE) to the post-translocational (POST) state as the newly formed A-site-bound peptidyl-tRNA and P-site-bound deacylated tRNA move to the P and E sites, respectively. Catalyzes the coordinated movement of the two tRNA molecules, the mRNA and conformational changes in the ribosome. The chain is Elongation factor G from Francisella tularensis subsp. tularensis (strain FSC 198).